A 148-amino-acid polypeptide reads, in one-letter code: Small ribosomal subunit protein uS15 (148 aa).

The span at 1 to 14 shows a compositional bias: basic residues; it reads MGRLHSHRHGKSHS. The disordered stretch occupies residues 1–27; that stretch reads MGRLHSHRHGKSHSIRPSSPKAPSWIQ.

This sequence belongs to the universal ribosomal protein uS15 family. As to quaternary structure, part of the 30S ribosomal subunit.

This is Small ribosomal subunit protein uS15 from Cenarchaeum symbiosum (strain A).